Reading from the N-terminus, the 75-residue chain is Kappa-scoloptoxin(03)-Ssm1d (75 aa).

Positions methionine 1–serine 23 are cleaved as a signal peptide.

The protein belongs to the scoloptoxin-03 family. Contains 3 disulfide bonds. As to expression, expressed by the venom gland.

It localises to the secreted. In terms of biological role, inhibits voltage-gated potassium channels. The protein is Kappa-scoloptoxin(03)-Ssm1d of Scolopendra mutilans (Chinese red-headed centipede).